The following is a 221-amino-acid chain: Protein-disulfide oxidoreductase DsbI (221 aa).

Residues 27–47 (FLWLLMAVAMGGLIILAHSFF) form a helical membrane-spanning segment. Cys-56 and Cys-59 are oxidised to a cystine. 2 consecutive transmembrane segments (helical) span residues 64–84 (FAMFVMVFGGLIAAINPKNII) and 85–105 (LKLIGCLAAFYGSIMGIKFSV). An intrachain disulfide couples Cys-128 to Cys-154. A helical membrane pass occupies residues 189 to 209 (LAFYEYGAGVPAGVWAMFCTV).

Belongs to the DsbB family. DsbI subfamily. In terms of assembly, interacts with DsbL.

The protein resides in the cell inner membrane. Required for disulfide bond formation in some proteins. Part of a redox system composed of DsbI and DsbL that mediates formation of an essential disulfide bond in AssT. This is Protein-disulfide oxidoreductase DsbI from Lelliottia amnigena (Enterobacter amnigenus).